We begin with the raw amino-acid sequence, 200 residues long: Protein Rv0461 (200 aa).

The tract at residues D47–V67 is disordered. 3 helical membrane-spanning segments follow: residues F102–Y122, V134–V154, and L159–A179.

It is found in the cell membrane. The chain is Protein Rv0461 from Mycobacterium tuberculosis (strain ATCC 25618 / H37Rv).